A 35-amino-acid chain; its full sequence is Photosystem II reaction center protein Y (35 aa).

Residues 1–4 lie on the Lumenal side of the membrane; it reads MDTR. The chain crosses the membrane as a helical span at residues 5–23; that stretch reads LLVVLLPVATAAAWALFNI. At 24-35 the chain is on the stromal side; that stretch reads GRLALQQLKRMS.

The protein belongs to the PsbY family. PSII is composed of 1 copy each of membrane proteins PsbA, PsbB, PsbC, PsbD, PsbE, PsbF, PsbH, PsbI, PsbJ, PsbK, PsbL, PsbM, PsbT, PsbX, PsbY, PsbZ, Psb30/Ycf12, at least 3 peripheral proteins of the oxygen-evolving complex and a large number of cofactors. It forms dimeric complexes.

The protein resides in the plastid. It is found in the chloroplast thylakoid membrane. Loosely associated component of the core of photosystem II (PSII), it is not always seen in crystals. PSII is a light-driven water plastoquinone oxidoreductase, using light energy to abstract electrons from H(2)O, generating a proton gradient subsequently used for ATP formation. In Emiliania huxleyi (Coccolithophore), this protein is Photosystem II reaction center protein Y.